The chain runs to 619 residues: MPKLRSATSTEGRNMAGARALWRATGMKDNDFGKPIIAIANSYTQFVPGHVHLKDMGDLVASAIAEAGGISKEFNTIAVDDGIAMGHGGMLYSLPSRELIADSVEYMVNAHCADALVCISNCDKITPGMLMAALRLNIPVVFVSGGPMEAGKTKLSDKIIKLDLVDAMVAAADSSVSEEDSAKIERSACPTCGSCSGMFTANSMNCLTEALGLSLPGNGSMLATHSDRRELFLEAGRRVMALTKRYYHDDDETALPRNIASFKAFENATALDIAMGGSSNTVLHLLAAAQEAEVDFTMADIDRISRKVPHLCKVAPSTPKYHMEDVHRAGGVMSILGELDRADLLHTDVPHVAADSGENLSHVLARYDLVQTQDENVRRFFSAGPAGIPTTKAFSQSCRWPSVDDDRQNGCIRSREFAFSQEGGLAVLSGNIAPKGCIVKTAGVDEDNLTFVGRARVYESQDDAVAGILGGEVVAGDVVVIRYEGPKGGPGMQEMLYPTSYLKSRGLGAQCALITDGRFSGGTSGLSIGHVSPEAASGGAIALIEQGDEIVIDIPARTIVLNVSDSELEARRQAMDAKGVLGWKPLNRQRYVSLALKAYALLATSADMGAVRDRTLLEG.

D81 is a binding site for Mg(2+). A [2Fe-2S] cluster-binding site is contributed by C122. 2 residues coordinate Mg(2+): D123 and K124. K124 carries the post-translational modification N6-carboxylysine. [2Fe-2S] cluster is bound at residue C195. Residue E494 coordinates Mg(2+). S520 (proton acceptor) is an active-site residue.

It belongs to the IlvD/Edd family. Homodimer. [2Fe-2S] cluster is required as a cofactor. It depends on Mg(2+) as a cofactor.

The catalysed reaction is (2R)-2,3-dihydroxy-3-methylbutanoate = 3-methyl-2-oxobutanoate + H2O. It catalyses the reaction (2R,3R)-2,3-dihydroxy-3-methylpentanoate = (S)-3-methyl-2-oxopentanoate + H2O. Its pathway is amino-acid biosynthesis; L-isoleucine biosynthesis; L-isoleucine from 2-oxobutanoate: step 3/4. The protein operates within amino-acid biosynthesis; L-valine biosynthesis; L-valine from pyruvate: step 3/4. Functionally, functions in the biosynthesis of branched-chain amino acids. Catalyzes the dehydration of (2R,3R)-2,3-dihydroxy-3-methylpentanoate (2,3-dihydroxy-3-methylvalerate) into 2-oxo-3-methylpentanoate (2-oxo-3-methylvalerate) and of (2R)-2,3-dihydroxy-3-methylbutanoate (2,3-dihydroxyisovalerate) into 2-oxo-3-methylbutanoate (2-oxoisovalerate), the penultimate precursor to L-isoleucine and L-valine, respectively. This chain is Dihydroxy-acid dehydratase, found in Shewanella denitrificans (strain OS217 / ATCC BAA-1090 / DSM 15013).